Here is an 806-residue protein sequence, read N- to C-terminus: Ribonucleoside-diphosphate reductase large subunit (806 aa).

In terms of domain architecture, ATP-cone spans 1–91; that stretch reads MYVLNRKGEE…TDNLHKNTSD (91 aa). ATP-binding positions include 5–6, 11–17, T52, and D56; these read NR and EDISFDQ. S215 is a binding site for GDP. A disulfide bridge connects residues C216 and C442. DTTP-binding positions include 224–226, K241, R254, and 261–262; these read DSI and RG. N425 contacts GDP. N425 functions as the Proton acceptor in the catalytic mechanism. The active-site Cysteine radical intermediate is C427. Residues E429 and 604–607 contribute to the GDP site; that span reads TAST. E429 acts as the Proton acceptor in catalysis.

Belongs to the ribonucleoside diphosphate reductase large chain family. In terms of assembly, heterodimer of a large and a small subunit.

The enzyme catalyses a 2'-deoxyribonucleoside 5'-diphosphate + [thioredoxin]-disulfide + H2O = a ribonucleoside 5'-diphosphate + [thioredoxin]-dithiol. With respect to regulation, under complex allosteric control mediated by deoxynucleoside triphosphates and ATP binding to separate specificity and activation sites on the large subunit. The type of nucleotide bound at the specificity site determines substrate preference. It seems probable that ATP makes the enzyme reduce CDP and UDP, dGTP favors ADP reduction and dTTP favors GDP reduction. Stimulated by ATP and inhibited by dATP binding to the activity site. Its function is as follows. Provides the precursors necessary for DNA synthesis. Catalyzes the biosynthesis of deoxyribonucleotides from the corresponding ribonucleotides. This Plasmodium falciparum (isolate Dd2) protein is Ribonucleoside-diphosphate reductase large subunit (RNR1).